Reading from the N-terminus, the 307-residue chain is MVKISVIGAGNVGSTTVQRLAELEPGEIVMTDIVEGMPQGKALDLMQAGAINGYDTRITGTNDYADIANSDLVIITAGIARKPGMSREDLIKTNSKIIGDVAGNIAKYAPNSIVINVTNPLDIITYVAMKATGFDPEKVFGMSGVLDAGRFASFIAEELKCSKRDVEAMVIGGHGDLMVPLPQYTTVSGIPLPELLPEKTIDRLVERTVNGGAEIVELLKQGSAFYAPSAAIVRMAEAVIKDSRRVLPASAYLEGQYGQKGIYFGVPVKLGANGIEEILELKLEDSQCEILKKSSETIRKGISKLEI.

NAD(+) is bound by residues 8 to 13 (GAGNVG) and Asp32. Substrate is bound by residues Arg81 and Arg87. NAD(+) is bound by residues Asn94 and 117 to 119 (VTN). The substrate site is built by Asn119 and Arg150. His174 functions as the Proton acceptor in the catalytic mechanism.

Belongs to the LDH/MDH superfamily.

The enzyme catalyses (S)-malate + NAD(+) = oxaloacetate + NADH + H(+). Catalyzes the reversible oxidation of malate to oxaloacetate. This chain is Malate dehydrogenase (mdh), found in Methanosarcina mazei (strain ATCC BAA-159 / DSM 3647 / Goe1 / Go1 / JCM 11833 / OCM 88) (Methanosarcina frisia).